The following is a 974-amino-acid chain: Translation initiation factor IF-2 (974 aa).

3 disordered regions span residues 67 to 86 (TRKH…ARTI), 101 to 133 (DVAE…RREA), and 146 to 385 (RQER…TFQA). Low complexity predominate over residues 105–114 (GAEQGQAQVA). 2 stretches are compositionally biased toward basic and acidic residues: residues 121–133 (ELKR…RREA) and 146–181 (RQER…KRAA). Low complexity predominate over residues 182–197 (AEAAAAQQAAAQQAAE). Positions 210–261 (EEARAAAERAAQREAAKKAEDAAREAADKARAEQEEIRKRREAAEAEARAIR) are enriched in basic and acidic residues. The segment covering 313–329 (PAGATPATTQAPAAGAG) has biased composition (low complexity). A compositionally biased stretch (gly residues) spans 358 to 371 (SSGGVDRGWRGGPK). The region spanning 474–643 (PRPPVVTVMG…LLQAEVLELK (170 aa)) is the tr-type G domain. A G1 region spans residues 483–490 (GHVDHGKT). 483-490 (GHVDHGKT) contributes to the GTP binding site. Residues 508 to 512 (GITQH) are G2. The G3 stretch occupies residues 529-532 (DTPG). GTP-binding positions include 529-533 (DTPGH) and 583-586 (NKID). The segment at 583–586 (NKID) is G4. Residues 619–621 (SAK) form a G5 region.

Belongs to the TRAFAC class translation factor GTPase superfamily. Classic translation factor GTPase family. IF-2 subfamily.

It is found in the cytoplasm. One of the essential components for the initiation of protein synthesis. Protects formylmethionyl-tRNA from spontaneous hydrolysis and promotes its binding to the 30S ribosomal subunits. Also involved in the hydrolysis of GTP during the formation of the 70S ribosomal complex. This is Translation initiation factor IF-2 from Burkholderia vietnamiensis (strain G4 / LMG 22486) (Burkholderia cepacia (strain R1808)).